The following is a 507-amino-acid chain: ATP synthase subunit alpha, chloroplastic (507 aa).

170–177 (GDRQTGKT) is an ATP binding site.

This sequence belongs to the ATPase alpha/beta chains family. In terms of assembly, F-type ATPases have 2 components, CF(1) - the catalytic core - and CF(0) - the membrane proton channel. CF(1) has five subunits: alpha(3), beta(3), gamma(1), delta(1), epsilon(1). CF(0) has four main subunits: a, b, b' and c.

It is found in the plastid. The protein localises to the chloroplast thylakoid membrane. It carries out the reaction ATP + H2O + 4 H(+)(in) = ADP + phosphate + 5 H(+)(out). Produces ATP from ADP in the presence of a proton gradient across the membrane. The alpha chain is a regulatory subunit. This Eucalyptus globulus subsp. globulus (Tasmanian blue gum) protein is ATP synthase subunit alpha, chloroplastic.